Here is a 65-residue protein sequence, read N- to C-terminus: Transcriptional regulatory protein SenS (65 aa).

The segment at residues 11–31 (RFRKRKTYGNQILPLELLIEK) is a DNA-binding region (H-T-H motif).

To B.natto SenN.

Functionally, regulates the expression of extracellular-protein genes of Bacillus subtilis. This Bacillus subtilis (strain 168) protein is Transcriptional regulatory protein SenS (senS).